Here is an 89-residue protein sequence, read N- to C-terminus: Repressor protein (89 aa).

A DNA-binding region (H-T-H motif) is located at residues 29-52; it reads SGDIARNTGYSRRRISDRCTVLVD.

In terms of biological role, transcriptional repressor expressed under lysogenic conditions, which specifically binds the host DNA site 'RRGAAG'. The binding occurs cooperatively, probably as 2 copies of a dimer. Possibly prevents RNA polymerase access to the promoters for lytic cell cycle transcription. The polypeptide is Repressor protein (T6) (Halobacterium salinarum (Halobacterium halobium)).